Here is a 498-residue protein sequence, read N- to C-terminus: Tumor necrosis factor receptor superfamily member 8 (498 aa).

The signal sequence occupies residues 1-18 (MSALLTAAGLLFLGMLQA). Over 19–287 (FPTDRPLKTT…STGTPFLDPG (269 aa)) the chain is Extracellular. TNFR-Cys repeat units follow at residues 68–105 (QCAPDYYVNEDGKCTACVTCLPGLVEKAPCSGNSPRIC) and 106–146 (ECQP…DTIC). 5 disulfide bridges follow: Cys69-Cys81, Cys84-Cys97, Cys87-Cys105, Cys107-Cys121, and Cys128-Cys146. The interval 142–168 (KDTICELPSSGSGPNCSNPGDRKTLTS) is disordered. The span at 149-160 (PSSGSGPNCSNP) shows a compositional bias: low complexity. 3 N-linked (GlcNAc...) asparagine glycosylation sites follow: Asn156, Asn183, and Asn229. A disordered region spans residues 204 to 256 (ELVKVPESSSSKAREPSPDPGNAEKNMTLELPSPGTLPDISTSENSKEPASTA). Over residues 242 to 256 (DISTSENSKEPASTA) the composition is skewed to polar residues. The chain crosses the membrane as a helical span at residues 288 to 308 (PVLFWVAMVVLLVGSGSFLLC). Over 309-498 (YWKACRRRFQ…DHGPTTVSEK (190 aa)) the chain is Cytoplasmic. Residues 338 to 358 (DSCPTEKLTQPQRSGSVTDPS) show a composition bias toward polar residues. Disordered regions lie at residues 338 to 370 (DSCPTEKLTQPQRSGSVTDPSTGHKLSPVSPPP), 389 to 411 (LDDSPAGNPFSPREPPEPRVSTE), and 436 to 498 (EVPE…VSEK). A phosphoserine mark is found at Ser339 and Ser353. 3 stretches are compositionally biased toward basic and acidic residues: residues 402-411 (EPPEPRVSTE), 456-465 (EVDHAPHYPE), and 484-498 (EGGKEDHGPTTVSEK).

The protein belongs to the TNFR8 family. In terms of assembly, interacts with TRAF1, TRAF2, TRAF3 and TRAF5. Detected in thymus and in activated splenocytes.

The protein localises to the cell membrane. Its function is as follows. Receptor for TNFSF8/CD30L. May play a role in the regulation of cellular growth and transformation of activated lymphoblasts. Regulates gene expression through activation of NF-kappa-B. The protein is Tumor necrosis factor receptor superfamily member 8 of Mus musculus (Mouse).